The chain runs to 235 residues: Venom metalloproteinase antarease-like TserMP_B (235 aa).

The region spanning 4-233 (IVVEYYIVTD…PTASCIFQQC (230 aa)) is the Peptidase M12B domain. Cysteines 137 and 228 form a disulfide. Histidine 161 contacts Zn(2+). Glutamate 162 is an active-site residue. Histidine 165 and histidine 171 together coordinate Zn(2+).

This sequence belongs to the venom metalloproteinase (M12B) family. Zn(2+) is required as a cofactor. As to expression, expressed by the venom gland.

The protein resides in the secreted. Its activity is regulated as follows. Inhibited by EDTA. Its function is as follows. Acts as a metalloprotease. Penetrates intact tissue and specifically cleaves the vesicle-associated membrane protein 2 (VAMP2) (part of the SNARE complex) involved in pancreatic secretion, thus disrupting the normal vesicular traffic. The sequence is that of Venom metalloproteinase antarease-like TserMP_B from Tityus serrulatus (Brazilian scorpion).